The following is a 139-amino-acid chain: Transcription antitermination protein NusB (139 aa).

Belongs to the NusB family.

Involved in transcription antitermination. Required for transcription of ribosomal RNA (rRNA) genes. Binds specifically to the boxA antiterminator sequence of the ribosomal RNA (rrn) operons. This is Transcription antitermination protein NusB from Nitratiruptor sp. (strain SB155-2).